The sequence spans 231 residues: PX domain-containing protein 1 (231 aa).

The PX domain occupies 1-134 (MASAVFEGTS…TFFERSPLDQ (134 aa)).

The sequence is that of PX domain-containing protein 1 (PXDC1) from Bos taurus (Bovine).